Consider the following 660-residue polypeptide: Putative ATP-dependent RNA helicase Pl10 (660 aa).

Acidic residues predominate over residues Met-1–Gly-11. The segment at Met-1–Lys-117 is disordered. N-acetylserine is present on Ser-2. Residues Leu-12–Leu-21 show a composition bias toward low complexity. Polar residues predominate over residues Arg-24 to Ser-34. The segment covering Arg-44 to Ala-66 has biased composition (basic and acidic residues). N6-acetyllysine is present on Lys-55. Ser-80, Ser-84, and Ser-89 each carry phosphoserine. Residues Gly-93 to Tyr-103 show a composition bias toward basic and acidic residues. Omega-N-methylarginine is present on Arg-100. Phosphoserine is present on Ser-101. Tyr-103 carries the phosphotyrosine modification. Arg-109 is subject to Omega-N-methylarginine. Lys-117 is modified (N6-acetyllysine). A Q motif motif is present at residues Glu-179–Lys-207. Phosphoserine is present on Ser-182. Tyr-199–Gln-206 is an ATP binding site. The Helicase ATP-binding domain maps to Ile-210–Leu-402. A Glycyl lysine isopeptide (Lys-Gly) (interchain with G-Cter in SUMO2) cross-link involves residue Lys-214. Residue Ala-223–Thr-230 participates in ATP binding. The DEAD box motif lies at Asp-346–Asp-349. A Helicase C-terminal domain is found at Asn-413–Ala-574. Ser-455 is modified (phosphoserine). Omega-N-methylarginine is present on Arg-590. Ser-592, Ser-603, and Ser-610 each carry phosphoserine. The disordered stretch occupies residues Arg-598–Phe-632. Residues Gln-602 to Arg-620 show a composition bias toward low complexity. Residues Arg-615 and Arg-630 each carry the omega-N-methylarginine modification. Residues Ser-621–Phe-632 show a composition bias toward gly residues.

Belongs to the DEAD box helicase family. DDX3/DED1 subfamily. In terms of tissue distribution, testis.

It catalyses the reaction ATP + H2O = ADP + phosphate + H(+). Functionally, putative ATP-dependent RNA helicase. Possible role in a key step of the spermatogenic process. The sequence is that of Putative ATP-dependent RNA helicase Pl10 (D1Pas1) from Mus musculus (Mouse).